The primary structure comprises 500 residues: Lysine--tRNA ligase (500 aa).

E410 and E417 together coordinate Mg(2+).

This sequence belongs to the class-II aminoacyl-tRNA synthetase family. As to quaternary structure, homodimer. Mg(2+) is required as a cofactor.

The protein localises to the cytoplasm. It catalyses the reaction tRNA(Lys) + L-lysine + ATP = L-lysyl-tRNA(Lys) + AMP + diphosphate. In Shewanella baltica (strain OS155 / ATCC BAA-1091), this protein is Lysine--tRNA ligase.